Here is a 214-residue protein sequence, read N- to C-terminus: Phosphatidylserine decarboxylase proenzyme (214 aa).

Ser-182 (schiff-base intermediate with substrate; via pyruvic acid) is an active-site residue. Residue Ser-182 is modified to Pyruvic acid (Ser); by autocatalysis.

This sequence belongs to the phosphatidylserine decarboxylase family. PSD-A subfamily. As to quaternary structure, heterodimer of a large membrane-associated beta subunit and a small pyruvoyl-containing alpha subunit. The cofactor is pyruvate. In terms of processing, is synthesized initially as an inactive proenzyme. Formation of the active enzyme involves a self-maturation process in which the active site pyruvoyl group is generated from an internal serine residue via an autocatalytic post-translational modification. Two non-identical subunits are generated from the proenzyme in this reaction, and the pyruvate is formed at the N-terminus of the alpha chain, which is derived from the carboxyl end of the proenzyme. The post-translation cleavage follows an unusual pathway, termed non-hydrolytic serinolysis, in which the side chain hydroxyl group of the serine supplies its oxygen atom to form the C-terminus of the beta chain, while the remainder of the serine residue undergoes an oxidative deamination to produce ammonia and the pyruvoyl prosthetic group on the alpha chain.

It localises to the cell membrane. It catalyses the reaction a 1,2-diacyl-sn-glycero-3-phospho-L-serine + H(+) = a 1,2-diacyl-sn-glycero-3-phosphoethanolamine + CO2. It participates in phospholipid metabolism; phosphatidylethanolamine biosynthesis; phosphatidylethanolamine from CDP-diacylglycerol: step 2/2. In terms of biological role, catalyzes the formation of phosphatidylethanolamine (PtdEtn) from phosphatidylserine (PtdSer). The chain is Phosphatidylserine decarboxylase proenzyme from Burkholderia cenocepacia (strain HI2424).